The sequence spans 260 residues: MFDIGVNLTSTQFASDRQKVVKRARDAGVTGMLITGTNALESQHAQRLAEAQPGFCWSTAGVHPHHASEWSTEIASTLRRLAEKPEVVAIGECGLDFNRNLSAHEQQEYAFDAQLALAAELNMPVFLHCREAHARFAAVLEPWLPKLAGAVIHCFTGTRDELEACLAMGLSVGITGWVCDERRGLELRELLPLIPADRLLLETDAPYLLPRDMRPRPTSRRNEPCFLPHIVNQVATWRGESAEELATRIDQNARTLFRLA.

3 residues coordinate a divalent metal cation: E92, H128, and H153.

Belongs to the metallo-dependent hydrolases superfamily. TatD-type hydrolase family. TatD subfamily. In terms of assembly, monomer. Mg(2+) serves as cofactor.

It localises to the cytoplasm. Functionally, 3'-5' exonuclease that prefers single-stranded DNA and RNA. May play a role in the H(2)O(2)-induced DNA damage repair. The sequence is that of 3'-5' ssDNA/RNA exonuclease TatD from Pantoea vagans (strain C9-1) (Pantoea agglomerans (strain C9-1)).